A 451-amino-acid chain; its full sequence is Phosphoglucosamine mutase (451 aa).

The active-site Phosphoserine intermediate is serine 102. 4 residues coordinate Mg(2+): serine 102, aspartate 242, aspartate 244, and aspartate 246. Residue serine 102 is modified to Phosphoserine.

The protein belongs to the phosphohexose mutase family. It depends on Mg(2+) as a cofactor. Activated by phosphorylation.

It carries out the reaction alpha-D-glucosamine 1-phosphate = D-glucosamine 6-phosphate. Catalyzes the conversion of glucosamine-6-phosphate to glucosamine-1-phosphate. The chain is Phosphoglucosamine mutase from Staphylococcus epidermidis (strain ATCC 35984 / DSM 28319 / BCRC 17069 / CCUG 31568 / BM 3577 / RP62A).